Reading from the N-terminus, the 103-residue chain is Small ribosomal subunit protein bS18 (103 aa).

A compositionally biased stretch (basic and acidic residues) spans 1 to 19 (MSEERTERPERTERPERPQ). Residues 1-33 (MSEERTERPERTERPERPQQRGSGPRKRRPFQR) form a disordered region. The span at 24–33 (GPRKRRPFQR) shows a compositional bias: basic residues.

This sequence belongs to the bacterial ribosomal protein bS18 family. In terms of assembly, part of the 30S ribosomal subunit. Forms a tight heterodimer with protein bS6.

Its function is as follows. Binds as a heterodimer with protein bS6 to the central domain of the 16S rRNA, where it helps stabilize the platform of the 30S subunit. This is Small ribosomal subunit protein bS18 from Geobacter sulfurreducens (strain ATCC 51573 / DSM 12127 / PCA).